A 232-amino-acid polypeptide reads, in one-letter code: Octanoyltransferase (232 aa).

Residues 44 to 219 (EYTADEIWVV…QLARQFGLVL (176 aa)) form the BPL/LPL catalytic domain. Substrate is bound by residues 83–90 (RGGQVTYH), 150–152 (ALG), and 163–165 (GLS). Cys181 functions as the Acyl-thioester intermediate in the catalytic mechanism.

This sequence belongs to the LipB family.

It is found in the cytoplasm. It carries out the reaction octanoyl-[ACP] + L-lysyl-[protein] = N(6)-octanoyl-L-lysyl-[protein] + holo-[ACP] + H(+). It participates in protein modification; protein lipoylation via endogenous pathway; protein N(6)-(lipoyl)lysine from octanoyl-[acyl-carrier-protein]: step 1/2. Functionally, catalyzes the transfer of endogenously produced octanoic acid from octanoyl-acyl-carrier-protein onto the lipoyl domains of lipoate-dependent enzymes. Lipoyl-ACP can also act as a substrate although octanoyl-ACP is likely to be the physiological substrate. This chain is Octanoyltransferase, found in Xanthomonas axonopodis pv. citri (strain 306).